The sequence spans 823 residues: Protein Jade-3 (823 aa).

The tract at residues 1-32 (MKRHRPVSSSDSSDESPSTSFTSGSMYRIKSK) is disordered. The span at 8 to 25 (SSSDSSDESPSTSFTSGS) shows a compositional bias: low complexity. K30 and K32 each carry N6-acetyllysine. Position 85 is a phosphoserine (S85). The PHD-type 1 zinc-finger motif lies at 200–250 (DVICDVCRSPDSEEGNDMVFCDKCNVCVHQACYGILKVPEGSWLCRSCVLG). The C2HC pre-PHD-type zinc finger occupies 252–286 (YPQCVLCPKKGGALKTTKTGTKWAHVSCALWIPEV). Residues 310 to 366 (LVCNLCKLKTGACIQCSIKSCITAFHVTCAFEHGLEMKTILDEGDEVKFKSYCLKHS) form a PHD-type 2 zinc finger. 2 disordered regions span residues 372–395 (LGEA…KTSL) and 542–576 (KLKM…VHSI). A compositionally biased stretch (low complexity) spans 561–575 (DQQPHSPDSSSSVHS). A Phosphoserine modification is found at S566. K601 bears the N6-acetyllysine mark. S608 carries the post-translational modification Phosphoserine. Residues 609–630 (LSHSRSEAKESSPAWRTPSSEC) form a disordered region. An N6-acetyllysine modification is found at K638. Polar residues-rich tracts occupy residues 650 to 664 (SSIG…SKFA) and 673 to 684 (WSGNVTQKDSSS). The tract at residues 650-684 (SSIGNGKSQPNSKFAKSNGLEGSWSGNVTQKDSSS) is disordered. K735 carries the N6-acetyllysine modification. The tract at residues 758–823 (RAPYQENDGY…HPLSHSSMQR (66 aa)) is disordered. Residues S774, S776, and S780 each carry the phosphoserine modification. A compositionally biased stretch (basic and acidic residues) spans 781–809 (DGNKEKVRVRKDSSDRENPPHDSRRDCHG).

The protein belongs to the JADE family. In terms of assembly, component of the HBO1 complex composed at least of ING4 or ING5, KAT7/HBO1, MEAF6, and one of JADE1, JADE2 and JADE3. Ubiquitously expressed, with highest levels in placenta and uterus.

In terms of biological role, scaffold subunit of some HBO1 complexes, which have a histone H4 acetyltransferase activity. The chain is Protein Jade-3 (JADE3) from Homo sapiens (Human).